The sequence spans 148 residues: Putative fusion protein (148 aa).

A disordered region spans residues 1–34; the sequence is MDRALSTFPGDDDETNERNINHREKTSGEHGHYE. Positions 16–34 are enriched in basic and acidic residues; the sequence is NERNINHREKTSGEHGHYE.

It belongs to the poxviruses fusion protein family. As to quaternary structure, homotrimer, covalently linked.

It localises to the virion membrane. This chain is Putative fusion protein, found in Sheeppox virus (strain KS-1) (SPPV).